The following is a 670-amino-acid chain: Extracellular matrix protein 2 (670 aa).

The N-terminal stretch at 1–19 (MKLAVLFCFILLIVLQTDC) is a signal peptide. Residues 96–153 (GYCFVKGMIMYNKAVWSPEPCTTCLCSNGRVLCDETECHPKACPYTIKPEGECCPICS) form the VWFC domain. Residues 185–270 (SEEDEEIAEG…EEDAIRGDVF (86 aa)) form a disordered region. Residues 192–227 (AEGHKEHKKETSVPTKIHGDGERTERKLRPEKEGRS) show a composition bias toward basic and acidic residues. Over residues 241-263 (ESKEETEREGEEEEEEEEEEEED) the composition is skewed to acidic residues. Positions 266-268 (RGD) match the Cell attachment site motif. The 38-residue stretch at 278–315 (PGTPRGRPRLPRSCSLSYRTISCVHADFTEIPPITAPE) folds into the LRRNT domain. 13 LRR repeats span residues 339–359 (NLERLDLSRNNITSSGIGPKA), 365–386 (KLMRLNMDGNNLVHIPSDLPST), 387–407 (LEELKINDNNLQAIDEKSLSD), 410–430 (QLVTLELEGNNLSEINVDPLA), 436–456 (SLSYLRLGRNKFRIIPQGLPA), 457–478 (STEELYLENNQIEEITEICFNH), 481–501 (KITMIILRYNKIEESRIAPLA), 507–528 (NLESIDLSYNKLYHVPSYLPKS), 529–549 (LLHLVLIGNQIDRIPGYVFGH), 553–573 (GLEYLYLSFNRLSDDGVDLVS), 580–601 (SLRELFLDHNDFKSIPPGIQDM), 603–624 (ALHFLRLNNNKIRNIHPEQICN), and 632–655 (ALEHLHLENNYIRTREISSYAFSC). An N-linked (GlcNAc...) asparagine glycan is attached at asparagine 349. The N-linked (GlcNAc...) asparagine glycan is linked to asparagine 420. Residue asparagine 477 is glycosylated (N-linked (GlcNAc...) asparagine).

The protein belongs to the small leucine-rich proteoglycan (SLRP) family. SLRP class I subfamily. As to quaternary structure, interacts with numerous extracellular matrix proteins. Interacts with isoform 1 of MSL1. Interacts with isoform 3 of RASSF1.

It is found in the secreted. The protein localises to the extracellular space. It localises to the extracellular matrix. Functionally, promotes matrix assembly and cell adhesiveness. The chain is Extracellular matrix protein 2 (Ecm2) from Mus musculus (Mouse).